Here is a 239-residue protein sequence, read N- to C-terminus: Large ribosomal subunit protein uL2 (239 aa).

Residues 202–239 (HGGGSHQHVGRPSTVARNTPPGRKVGHIAARRTGRRKG) are disordered. The span at 225–239 (KVGHIAARRTGRRKG) shows a compositional bias: basic residues.

Belongs to the universal ribosomal protein uL2 family. As to quaternary structure, part of the 50S ribosomal subunit. Forms a bridge to the 30S subunit in the 70S ribosome.

In terms of biological role, one of the primary rRNA binding proteins. Required for association of the 30S and 50S subunits to form the 70S ribosome, for tRNA binding and peptide bond formation. It has been suggested to have peptidyltransferase activity; this is somewhat controversial. Makes several contacts with the 16S rRNA in the 70S ribosome. In Desulfurococcus amylolyticus (strain DSM 18924 / JCM 16383 / VKM B-2413 / 1221n) (Desulfurococcus kamchatkensis), this protein is Large ribosomal subunit protein uL2.